A 414-amino-acid chain; its full sequence is Nuclear hormone receptor family member nhr-213 (414 aa).

The nuclear receptor DNA-binding region spans 21–99 (IVLCKVCALS…LGMTPENVQF (79 aa)). 2 consecutive NR C4-type zinc fingers follow at residues 24–44 (CKVC…CRAC) and 62–82 (CKKG…CRLC). The region spanning 162–414 (SAAKKMNSLE…DFSDPDIFDC (253 aa)) is the NR LBD domain.

The protein belongs to the nuclear hormone receptor family.

The protein resides in the nucleus. In terms of biological role, orphan nuclear receptor. The polypeptide is Nuclear hormone receptor family member nhr-213 (nhr-213) (Caenorhabditis elegans).